We begin with the raw amino-acid sequence, 512 residues long: GMP synthase [glutamine-hydrolyzing] (512 aa).

In terms of domain architecture, Glutamine amidotransferase type-1 spans 9–198; that stretch reads GVLVVDFGGQ…WLSLVGAPRT (190 aa). Cys87 acts as the Nucleophile in catalysis. Residues His173 and Glu175 contribute to the active site. Residues 199-387 form the GMPS ATP-PPase domain; that stretch reads WRPGDMVSEL…LGVPRELIWK (189 aa). Residue 226 to 232 coordinates ATP; that stretch reads SGGVDST.

The catalysed reaction is XMP + L-glutamine + ATP + H2O = GMP + L-glutamate + AMP + diphosphate + 2 H(+). The protein operates within purine metabolism; GMP biosynthesis; GMP from XMP (L-Gln route): step 1/1. Functionally, catalyzes the synthesis of GMP from XMP. The polypeptide is GMP synthase [glutamine-hydrolyzing] (guaA) (Aeropyrum pernix (strain ATCC 700893 / DSM 11879 / JCM 9820 / NBRC 100138 / K1)).